Consider the following 281-residue polypeptide: Phosphatidylglycerol--prolipoprotein diacylglyceryl transferase (281 aa).

A run of 4 helical transmembrane segments spans residues 23–43 (VGPL…LFAW), 71–91 (FVIW…VLFY), 107–127 (WDGG…MILF), and 133–153 (ILVW…LGVV). Residue Arg-154 participates in a 1,2-diacyl-sn-glycero-3-phospho-(1'-sn-glycerol) binding. 3 helical membrane-spanning segments follow: residues 189–209 (LYEA…LVWG), 217–237 (GFVA…VEFF), and 247–267 (LFGG…LLGL).

It belongs to the Lgt family.

The protein localises to the cell inner membrane. The catalysed reaction is L-cysteinyl-[prolipoprotein] + a 1,2-diacyl-sn-glycero-3-phospho-(1'-sn-glycerol) = an S-1,2-diacyl-sn-glyceryl-L-cysteinyl-[prolipoprotein] + sn-glycerol 1-phosphate + H(+). It functions in the pathway protein modification; lipoprotein biosynthesis (diacylglyceryl transfer). Functionally, catalyzes the transfer of the diacylglyceryl group from phosphatidylglycerol to the sulfhydryl group of the N-terminal cysteine of a prolipoprotein, the first step in the formation of mature lipoproteins. This Brucella abortus (strain S19) protein is Phosphatidylglycerol--prolipoprotein diacylglyceryl transferase.